The primary structure comprises 1339 residues: Transcription factor tau subunit sfc3 (1339 aa).

Positions 470-515 are disordered; it reads MESNAEVSPDGMTLLPRKRGRPRKSANISVTSSPIRPSKNENNLPS. The a.T hook DNA-binding region spans 485 to 497; it reads PRKRGRPRKSANI. A compositionally biased stretch (polar residues) spans 495-514; sequence ANISVTSSPIRPSKNENNLP. Phosphoserine is present on residues serine 595 and serine 596. The disordered stretch occupies residues 791 to 826; the sequence is RRKSMPAEIKRHKESSETKPVDKEEVKKNEKEKDDP. Over residues 798 to 826 the composition is skewed to basic and acidic residues; sequence EIKRHKESSETKPVDKEEVKKNEKEKDDP.

Component of the TFIIIC complex including sfc1, sfc3, sfc4, sfc6 and sfc7. The subunits are organized in two globular domains, tauA and tauB, connected by a proteolysis-sensitive and flexible linker. Interacts with sfc1, sfc4 and sfc6.

The protein resides in the nucleus envelope. Functionally, TFIIIC mediates tRNA and 5S RNA gene activation by binding to intragenic promoter elements. Upstream of the transcription start site, TFIIIC assembles the initiation complex TFIIIB-TFIIIC-tDNA, which is sufficient for RNA polymerase III recruitment and function. Part of the tauB domain of TFIIIC that binds boxB DNA promoter sites of tRNA and similar genes. Cooperates with sfc6 in DNA binding. Localizes to chromatin insulator sequence without recruiting RNA polymerase III and plays a role in nuclear organization. In Schizosaccharomyces pombe (strain 972 / ATCC 24843) (Fission yeast), this protein is Transcription factor tau subunit sfc3.